Consider the following 155-residue polypeptide: 3-hydroxyacyl-[acyl-carrier-protein] dehydratase FabZ (155 aa).

Residue His57 is part of the active site.

This sequence belongs to the thioester dehydratase family. FabZ subfamily.

The protein localises to the cytoplasm. It catalyses the reaction a (3R)-hydroxyacyl-[ACP] = a (2E)-enoyl-[ACP] + H2O. In terms of biological role, involved in unsaturated fatty acids biosynthesis. Catalyzes the dehydration of short chain beta-hydroxyacyl-ACPs and long chain saturated and unsaturated beta-hydroxyacyl-ACPs. This is 3-hydroxyacyl-[acyl-carrier-protein] dehydratase FabZ from Cereibacter sphaeroides (strain ATCC 17025 / ATH 2.4.3) (Rhodobacter sphaeroides).